The following is a 280-amino-acid chain: Manganese transport system membrane protein MntC (280 aa).

The next 9 helical transmembrane spans lie at 16–36, 41–61, 62–82, 92–112, 137–157, 168–188, 193–213, 221–241, and 244–264; these read ALIT…FIIL, LMGD…YMMG, MNFF…IGFV, TAIG…ISFA, TIII…EFLV, YGLN…LVTV, TVGI…AYLL, IMLA…FSYI, and LASG…AFLF.

Belongs to the ABC-3 integral membrane protein family.

Its subcellular location is the cell membrane. This protein is probably a component of a manganese permease, a binding protein-dependent, ATP-driven transport system. The sequence is that of Manganese transport system membrane protein MntC (mntC) from Listeria innocua serovar 6a (strain ATCC BAA-680 / CLIP 11262).